The chain runs to 1052 residues: Error-prone DNA polymerase (1052 aa).

It belongs to the DNA polymerase type-C family. DnaE2 subfamily.

Its subcellular location is the cytoplasm. It carries out the reaction DNA(n) + a 2'-deoxyribonucleoside 5'-triphosphate = DNA(n+1) + diphosphate. Functionally, DNA polymerase involved in damage-induced mutagenesis and translesion synthesis (TLS). It is not the major replicative DNA polymerase. This Bordetella parapertussis (strain 12822 / ATCC BAA-587 / NCTC 13253) protein is Error-prone DNA polymerase.